The following is a 172-amino-acid chain: Stellate protein CG33239/CG33241 (172 aa).

It belongs to the casein kinase 2 subunit beta family. As to quaternary structure, interacts in vitro with the casein kinase 2 alpha subunit (CkII-alpha). The relevance of such interaction is however unclear in vivo. As to expression, probably not expressed in wild-type flies. In males lacking the Y chromosome, it is testis-specific and constitutes the main component of star-shaped crystals.

Functionally, unknown. In males lacking the Y chromosome, its strong overexpression leads to the appearance of proteinaceous star-shaped crystals in the primary spermatocytes causing meiotic drive, possibly by interfering with normal casein kinase 2 activity. This chain is Stellate protein CG33239/CG33241 (Ste:CG33239), found in Drosophila melanogaster (Fruit fly).